The sequence spans 119 residues: Iron-sulfur cluster insertion protein ErpA (119 aa).

Iron-sulfur cluster is bound by residues Cys47, Cys111, and Cys113.

Belongs to the HesB/IscA family. In terms of assembly, homodimer. Iron-sulfur cluster is required as a cofactor.

Required for insertion of 4Fe-4S clusters for at least IspG. This chain is Iron-sulfur cluster insertion protein ErpA, found in Blochmanniella floridana.